A 334-amino-acid polypeptide reads, in one-letter code: MTLRIGIIGTGAIGTDHARRINRVLSGAEVTAVTDVNRDSAEACVAGVAPGAQILGSAEEVIAASDAVLVCSWGTAHETQVLAAIAAGKPCFCEKPLATEAYGARRIVEAEEAMGRRLVQVGFMRRYDRGYVALKETVRTRLGPPLMIHAAHRNPSVPGRYRTPMAIHDTLIHEIDVLRWLLDDEYVSAQVIFPRATRHTHAGLRDPQIVLLETAKGVRIDVEIFVNCRYGYDIQCEVVGEEGTARLPEPTAIPTRLGAVFGQPILMDWKDRFIDSYDVELQDFLKAAAQGTAAGPSAWDGYAAAITADVCVQAQERPGAILPVTLPARPALYA.

Belongs to the Gfo/Idh/MocA family. As to quaternary structure, homotetramer.

It carries out the reaction myo-inositol + NAD(+) = scyllo-inosose + NADH + H(+). Functionally, involved in the oxidation of myo-inositol (MI) to 2-keto-myo-inositol (2KMI or 2-inosose). This chain is Inositol 2-dehydrogenase, found in Cereibacter sphaeroides (strain ATCC 17023 / DSM 158 / JCM 6121 / CCUG 31486 / LMG 2827 / NBRC 12203 / NCIMB 8253 / ATH 2.4.1.) (Rhodobacter sphaeroides).